The sequence spans 230 residues: Large ribosomal subunit protein uL1 (230 aa).

This sequence belongs to the universal ribosomal protein uL1 family. Part of the 50S ribosomal subunit.

Its function is as follows. Binds directly to 23S rRNA. The L1 stalk is quite mobile in the ribosome, and is involved in E site tRNA release. Protein L1 is also a translational repressor protein, it controls the translation of the L11 operon by binding to its mRNA. In Bacillus mycoides (strain KBAB4) (Bacillus weihenstephanensis), this protein is Large ribosomal subunit protein uL1.